We begin with the raw amino-acid sequence, 78 residues long: uncharacterized protein (78 aa).

Residues 1-22 (MFKKSVLFATLLSGVMAFSTNA) form the signal peptide.

The protein belongs to the BhsA/McbA family.

The protein localises to the periplasm. Probably involved in reactive chlorine species (RCS) stress resistance. This is an uncharacterized protein from Escherichia coli (strain K12).